Reading from the N-terminus, the 276-residue chain is Exosome complex component RRP43 (276 aa).

N-acetylalanine is present on A2.

The protein belongs to the RNase PH family. As to quaternary structure, component of the RNA exosome core complex (Exo-9), composed of EXOSC1, EXOSC2, EXOSC3, EXOSC4, EXOSC5, EXOSC6, EXOSC7, EXOSC8 and EXOSC9; within the complex interacts with EXOSC5 and EXOSC6. The catalytically inactive RNA exosome core complex (Exo-9) associates with the catalytic subunit EXOSC10/RRP6. Exo-9 may associate with DIS3 to form the nucleolar exosome complex, or DIS3L to form the cytoplasmic exosome complex. Exo-9 is formed by a hexameric base ring consisting of the heterodimers EXOSC4-EXOSC9, EXOSC5-EXOSC8 and EXOSC6-EXOSC7, and a cap ring consisting of EXOSC1, EXOSC2 and EXOSC3. The RNA exosome complex associates with cofactors C1D/RRP47, MPHOSPH6/MPP6 and MTREX/MTR4.

Its subcellular location is the cytoplasm. It is found in the nucleus. It localises to the nucleolus. Functionally, non-catalytic component of the RNA exosome complex which has 3'-&gt;5' exoribonuclease activity and participates in a multitude of cellular RNA processing and degradation events. In the nucleus, the RNA exosome complex is involved in proper maturation of stable RNA species such as rRNA, snRNA and snoRNA, in the elimination of RNA processing by-products and non-coding 'pervasive' transcripts, such as antisense RNA species and promoter-upstream transcripts (PROMPTs), and of mRNAs with processing defects, thereby limiting or excluding their export to the cytoplasm. The RNA exosome may be involved in Ig class switch recombination (CSR) and/or Ig variable region somatic hypermutation (SHM) by targeting AICDA deamination activity to transcribed dsDNA substrates. In the cytoplasm, the RNA exosome complex is involved in general mRNA turnover and specifically degrades inherently unstable mRNAs containing AU-rich elements (AREs) within their 3' untranslated regions, and in RNA surveillance pathways, preventing translation of aberrant mRNAs. It seems to be involved in degradation of histone mRNA. The catalytic inactive RNA exosome core complex of 9 subunits (Exo-9) is proposed to play a pivotal role in the binding and presentation of RNA for ribonucleolysis, and to serve as a scaffold for the association with catalytic subunits and accessory proteins or complexes. EXOSC8 binds to ARE-containing RNAs. The protein is Exosome complex component RRP43 (Exosc8) of Mus musculus (Mouse).